Consider the following 291-residue polypeptide: ATP synthase gamma chain (291 aa).

The protein belongs to the ATPase gamma chain family. F-type ATPases have 2 components, CF(1) - the catalytic core - and CF(0) - the membrane proton channel. CF(1) has five subunits: alpha(3), beta(3), gamma(1), delta(1), epsilon(1). CF(0) has three main subunits: a, b and c.

Its subcellular location is the cell inner membrane. Produces ATP from ADP in the presence of a proton gradient across the membrane. The gamma chain is believed to be important in regulating ATPase activity and the flow of protons through the CF(0) complex. This Rhodopseudomonas palustris (strain HaA2) protein is ATP synthase gamma chain.